The sequence spans 102 residues: Citrate lyase acyl carrier protein (102 aa).

An O-(phosphoribosyl dephospho-coenzyme A)serine modification is found at Ser14.

The protein belongs to the CitD family. Oligomer with a subunit composition of (alpha,beta,gamma)6.

It localises to the cytoplasm. Its function is as follows. Covalent carrier of the coenzyme of citrate lyase. The protein is Citrate lyase acyl carrier protein of Streptococcus equi subsp. zooepidemicus (strain H70).